We begin with the raw amino-acid sequence, 1091 residues long: Self-sufficient cytochrome P450 monooxygenase CYP505E1 (1091 aa).

Cys433 is a heme binding site. In terms of domain architecture, Flavodoxin-like spans 528 to 669 (ICFFYGSNSG…DLEAWEETSL (142 aa)). FMN-binding positions include 534 to 538 (SNSGT) and 613 to 645 (VFGC…TRLA). The FAD-binding FR-type domain occupies 707 to 935 (KDLMEARVTT…RPAKEAFHLP (229 aa)).

This sequence in the N-terminal section; belongs to the cytochrome P450 family. FAD serves as cofactor. It depends on FMN as a cofactor. Heme is required as a cofactor.

It carries out the reaction 2 oxidized [cytochrome P450] + NADPH = 2 reduced [cytochrome P450] + NADP(+) + H(+). It catalyses the reaction an organic molecule + reduced [NADPH--hemoprotein reductase] + O2 = an alcohol + oxidized [NADPH--hemoprotein reductase] + H2O + H(+). The enzyme catalyses dodecanoate + reduced [NADPH--hemoprotein reductase] + O2 = 5-hydroxydodecanoate + oxidized [NADPH--hemoprotein reductase] + H2O + H(+). The catalysed reaction is tetradecanoate + reduced [NADPH--hemoprotein reductase] + O2 = 7-hydroxytetradecanoate + oxidized [NADPH--hemoprotein reductase] + H2O + H(+). It carries out the reaction dodecan-1-ol + reduced [NADPH--hemoprotein reductase] + O2 = 1,5-dodecanediol + oxidized [NADPH--hemoprotein reductase] + H2O + H(+). It catalyses the reaction dodecan-1-ol + reduced [NADPH--hemoprotein reductase] + O2 = 1,4-dodecanediol + oxidized [NADPH--hemoprotein reductase] + H2O + H(+). The enzyme catalyses dodecan-1-ol + reduced [NADPH--hemoprotein reductase] + O2 = 1,6-dodecanediol + oxidized [NADPH--hemoprotein reductase] + H2O + H(+). Self-sufficient cytochrome P450 monooxygenase that catalyzes the regioselective in-chain hydroxylation of alkanes, fatty alcohols, and fatty acids at the omega-7 position. Performs hydroxylation of C10-C16 n-alkanes and C12 and C14 fatty alcohols; and thereby enables the one step biocatalytic synthesis of rare alcohols such as 5-dodecanol and 7-tetradecanol. Converts 1-dodecanol into 1,5-dodecanediol as major product with very little sub-terminally hydroxylated products with the 1,4-dodecanediol and 1,6-dodecanediol more abundant. Converts dodecanoic acid to 5-hydroxydodecanoic acid which can be further converted into delta-dodecalactone by lactonization of the 5-hydroxy acid at low pH. Also gives sub-terminal hydroxylation of dodecanoic acid with 9-hydroxydodecanoic acid being the second most abundant product. This is Self-sufficient cytochrome P450 monooxygenase CYP505E1 from Aspergillus niger (strain ATCC MYA-4892 / CBS 513.88 / FGSC A1513).